Consider the following 36-residue polypeptide: Photosystem I reaction center subunit VIII (36 aa).

Residues 7 to 29 (PSIFVPLVGLVFPAITMASLFIY) traverse the membrane as a helical segment.

This sequence belongs to the PsaI family.

It localises to the plastid. The protein resides in the chloroplast thylakoid membrane. May help in the organization of the PsaL subunit. The protein is Photosystem I reaction center subunit VIII of Psilotum nudum (Whisk fern).